We begin with the raw amino-acid sequence, 37 residues long: Large ribosomal subunit protein bL36c (37 aa).

The protein belongs to the bacterial ribosomal protein bL36 family.

The protein resides in the plastid. Its subcellular location is the chloroplast. The polypeptide is Large ribosomal subunit protein bL36c (Welwitschia mirabilis (Tree tumbo)).